The following is a 125-amino-acid chain: MITMKIIKTEYDKIKPYITKDGSIIRELLHPNIYKGVKQSLAEAIVPVGSKTLLHKHYTSEEIYYILEGRGLMTLDNEKFEVKKGDTIYIPPKTPHKIENIGNVPLKILCCSYPPYSHEDTEILE.

Residues 45–110 form the Cupin type-2 domain; it reads IVPVGSKTLL…IGNVPLKILC (66 aa).

This is an uncharacterized protein from Methanocaldococcus jannaschii (strain ATCC 43067 / DSM 2661 / JAL-1 / JCM 10045 / NBRC 100440) (Methanococcus jannaschii).